A 623-amino-acid polypeptide reads, in one-letter code: Bifunctional enzyme CysN/CysC (623 aa).

The interval 1 to 450 is sulfate adenylyltransferase; that stretch reads MQSVIAYLKQ…HVARARIKGQ (450 aa). In terms of domain architecture, tr-type G spans 14-228; the sequence is KPLLRFITCG…YLEALEPADV (215 aa). The segment at 23-30 is G1; that stretch reads GSVDDGKS. Position 23–30 (23–30) interacts with GTP; the sequence is GSVDDGKS. The segment at 81-85 is G2; that stretch reads GITID. A G3 region spans residues 102 to 105; the sequence is DCPG. GTP-binding positions include 102-106 and 157-160; these read DCPGH and NKMD. The interval 157–160 is G4; that stretch reads NKMD. The G5 stretch occupies residues 194–196; the sequence is SAL. Residues 451–623 are adenylyl-sulfate kinase; the sequence is TPKVLWFTGL…VLSLLGVEGK (173 aa). 459–466 is a binding site for ATP; sequence GLSGAGKS. S533 serves as the catalytic Phosphoserine intermediate.

The protein in the C-terminal section; belongs to the APS kinase family. It in the N-terminal section; belongs to the TRAFAC class translation factor GTPase superfamily. Classic translation factor GTPase family. CysN/NodQ subfamily. In terms of assembly, heterodimer composed of CysD, the smaller subunit, and CysNC.

The catalysed reaction is sulfate + ATP + H(+) = adenosine 5'-phosphosulfate + diphosphate. It catalyses the reaction adenosine 5'-phosphosulfate + ATP = 3'-phosphoadenylyl sulfate + ADP + H(+). It functions in the pathway sulfur metabolism; hydrogen sulfide biosynthesis; sulfite from sulfate: step 1/3. Its pathway is sulfur metabolism; hydrogen sulfide biosynthesis; sulfite from sulfate: step 2/3. In terms of biological role, with CysD forms the ATP sulfurylase (ATPS) that catalyzes the adenylation of sulfate producing adenosine 5'-phosphosulfate (APS) and diphosphate, the first enzymatic step in sulfur assimilation pathway. APS synthesis involves the formation of a high-energy phosphoric-sulfuric acid anhydride bond driven by GTP hydrolysis by CysN coupled to ATP hydrolysis by CysD. Functionally, APS kinase catalyzes the synthesis of activated sulfate. This chain is Bifunctional enzyme CysN/CysC (cysNC), found in Xylella fastidiosa (strain Temecula1 / ATCC 700964).